The primary structure comprises 90 residues: Probable Fe(2+)-trafficking protein (90 aa).

The protein belongs to the Fe(2+)-trafficking protein family.

In terms of biological role, could be a mediator in iron transactions between iron acquisition and iron-requiring processes, such as synthesis and/or repair of Fe-S clusters in biosynthetic enzymes. This is Probable Fe(2+)-trafficking protein from Variovorax paradoxus (strain S110).